The primary structure comprises 696 residues: Lutropin-choriogonadotropic hormone receptor (696 aa).

Positions 1-27 are cleaved as a signal peptide; it reads MRRRSLALRLLLALLLLPPPLPQTLLG. The Extracellular portion of the chain corresponds to 28–358; sequence APCPEPCSCR…AFNPCEDIMG (331 aa). N-linked (GlcNAc...) asparagine glycosylation occurs at Asn-99. LRR repeat units follow at residues 122–147, 149–171, 172–196, 198–220, 221–244, and 250–271; these read LPRLKYLSICNTGIRKLPDVTKIFSS, FNFILEICDNLHITTVPANAFQG, MNNESITLKLYGNGFEEIQSHAFNG, TLISLELKENAHLKKMHNDAFRG, ARGPSILDISSTKLQALPSYGLES, and ATSSYSLKKLPSREKFTNLLDA. 2 N-linked (GlcNAc...) asparagine glycosylation sites follow: Asn-174 and Asn-195. 3 N-linked (GlcNAc...) asparagine glycosylation sites follow: Asn-291, Asn-299, and Asn-313. Tyr-331 carries the sulfotyrosine modification. The helical transmembrane segment at 359–386 threads the bilayer; the sequence is YDFLRVLIWLINILAIMGNVTVLFVLLT. Topologically, residues 387–395 are cytoplasmic; sequence SHYKLTVPR. A helical membrane pass occupies residues 396-418; that stretch reads FLMCNLSFADFCMGLYLLLIASV. Over 419–439 the chain is Extracellular; the sequence is DAQTKGQYYNHAIDWQTGNGC. Cys-439 and Cys-514 form a disulfide bridge. Residues 440–462 traverse the membrane as a helical segment; sequence SVAGFFTVFASELSVYTLTVITL. Over 463–482 the chain is Cytoplasmic; it reads ERWHTITYAIQLDQKLRLRH. The chain crosses the membrane as a helical span at residues 483–505; sequence AIPIMLGGWLFSTLIAMLPLVGV. Residues 506-525 are Extracellular-facing; sequence SSYMKVSICLPMDVETTLSQ. A helical membrane pass occupies residues 526 to 547; the sequence is VYILTILILNVVAFIIICACYI. Residues 548–570 lie on the Cytoplasmic side of the membrane; the sequence is KIYFAVQNPELMATNKDTKIAKK. A helical transmembrane segment spans residues 571 to 594; it reads MAVLIFTDFTCMAPISFFAISAAL. Over 595–605 the chain is Extracellular; sequence KVPLITVTNSK. The helical transmembrane segment at 606-626 threads the bilayer; it reads VLLVLFYPVNSCANPFLYAIF. Topologically, residues 627 to 696 are cytoplasmic; it reads TKAFRRDFFL…VMDKTCYKDC (70 aa). S-palmitoyl cysteine attachment occurs at residues Cys-643 and Cys-644.

Belongs to the G-protein coupled receptor 1 family. FSH/LSH/TSH subfamily. In terms of processing, sulfated.

Its subcellular location is the cell membrane. In terms of biological role, receptor for lutropin-choriogonadotropic hormone. The activity of this receptor is mediated by G proteins which activate adenylate cyclase. This chain is Lutropin-choriogonadotropic hormone receptor (LHCGR), found in Sus scrofa (Pig).